We begin with the raw amino-acid sequence, 480 residues long: Proline--tRNA ligase (480 aa).

It belongs to the class-II aminoacyl-tRNA synthetase family. ProS type 3 subfamily. Homodimer.

It localises to the cytoplasm. The catalysed reaction is tRNA(Pro) + L-proline + ATP = L-prolyl-tRNA(Pro) + AMP + diphosphate. Its function is as follows. Catalyzes the attachment of proline to tRNA(Pro) in a two-step reaction: proline is first activated by ATP to form Pro-AMP and then transferred to the acceptor end of tRNA(Pro). In Pyrococcus abyssi (strain GE5 / Orsay), this protein is Proline--tRNA ligase.